The primary structure comprises 178 residues: Large ribosomal subunit protein uL6 (178 aa).

The tract at residues G159–K178 is disordered.

It belongs to the universal ribosomal protein uL6 family. Part of the 50S ribosomal subunit.

In terms of biological role, this protein binds to the 23S rRNA, and is important in its secondary structure. It is located near the subunit interface in the base of the L7/L12 stalk, and near the tRNA binding site of the peptidyltransferase center. This chain is Large ribosomal subunit protein uL6, found in Listeria monocytogenes serotype 4b (strain CLIP80459).